The sequence spans 307 residues: tRNA pseudouridine synthase B (307 aa).

The active-site Nucleophile is Asp38.

This sequence belongs to the pseudouridine synthase TruB family. Type 1 subfamily.

It catalyses the reaction uridine(55) in tRNA = pseudouridine(55) in tRNA. In terms of biological role, responsible for synthesis of pseudouridine from uracil-55 in the psi GC loop of transfer RNAs. This is tRNA pseudouridine synthase B from Bacillus thuringiensis (strain Al Hakam).